A 252-amino-acid polypeptide reads, in one-letter code: C4b-binding protein beta chain (252 aa).

The signal sequence occupies residues 1 to 17 (MFFWCACCLMVAWRVSA). Sushi domains are found at residues 21–78 (EHCP…ECRL), 79–136 (GHCP…ICKS), and 137–193 (RDCD…VCKL). 6 cysteine pairs are disulfide-bonded: C23-C63, C49-C76, C81-C121, C107-C134, C139-C179, and C165-C191. 5 N-linked (GlcNAc...) asparagine glycosylation sites follow: N64, N71, N98, N117, and N154.

As to quaternary structure, disulfide-linked complex of alpha and beta chains of 3 possible sorts: a 570 kDa complex of 7 alpha chains and 1 beta chain, a 530 kDa homoheptamer of alpha chains or a 500 kDa complex of 6 alpha chains and 1 beta chain. The central body of the alpha chain homomer supports tentacles, each with the binding site for C4b at the end.

It is found in the secreted. Controls the classical pathway of complement activation. It binds as a cofactor to C3b/C4b inactivator (C3bINA), which then hydrolyzes the complement fragment C4b. It also accelerates the degradation of the C4bC2a complex (C3 convertase) by dissociating the complement fragment C2a. It also interacts with anticoagulant protein S and with serum amyloid P component. The beta chain binds protein S. This chain is C4b-binding protein beta chain (C4BPB), found in Homo sapiens (Human).